An 853-amino-acid polypeptide reads, in one-letter code: DNA mismatch repair protein MutS (853 aa).

613–620 (GPNMGGKS) provides a ligand contact to ATP.

This sequence belongs to the DNA mismatch repair MutS family.

In terms of biological role, this protein is involved in the repair of mismatches in DNA. It is possible that it carries out the mismatch recognition step. This protein has a weak ATPase activity. The protein is DNA mismatch repair protein MutS of Vibrio atlanticus (strain LGP32) (Vibrio splendidus (strain Mel32)).